A 348-amino-acid polypeptide reads, in one-letter code: Phosphoribosylformylglycinamidine cyclo-ligase (348 aa).

The protein belongs to the AIR synthase family.

The protein localises to the cytoplasm. It carries out the reaction 2-formamido-N(1)-(5-O-phospho-beta-D-ribosyl)acetamidine + ATP = 5-amino-1-(5-phospho-beta-D-ribosyl)imidazole + ADP + phosphate + H(+). It participates in purine metabolism; IMP biosynthesis via de novo pathway; 5-amino-1-(5-phospho-D-ribosyl)imidazole from N(2)-formyl-N(1)-(5-phospho-D-ribosyl)glycinamide: step 2/2. The chain is Phosphoribosylformylglycinamidine cyclo-ligase from Cereibacter sphaeroides (strain ATCC 17029 / ATH 2.4.9) (Rhodobacter sphaeroides).